The following is a 175-amino-acid chain: Large ribosomal subunit protein uL10 (175 aa).

Belongs to the universal ribosomal protein uL10 family. In terms of assembly, part of the ribosomal stalk of the 50S ribosomal subunit. The N-terminus interacts with L11 and the large rRNA to form the base of the stalk. The C-terminus forms an elongated spine to which L12 dimers bind in a sequential fashion forming a multimeric L10(L12)X complex.

In terms of biological role, forms part of the ribosomal stalk, playing a central role in the interaction of the ribosome with GTP-bound translation factors. This chain is Large ribosomal subunit protein uL10, found in Prochlorococcus marinus (strain MIT 9211).